We begin with the raw amino-acid sequence, 1173 residues long: Ubiquitin conjugation factor E4 B (1173 aa).

At Met1 the chain carries N-acetylmethionine. The interval 1–155 (MEELSADEIR…EPSSGPEVSE (155 aa)) is disordered. A compositionally biased stretch (low complexity) spans 16–33 (RLAGGQTSQPTTPLTSPQ). Residues Ser23 and Ser31 each carry the phosphoserine modification. Polar residues predominate over residues 51–64 (QSLGLNVHNMTPAT). Low complexity predominate over residues 76–99 (SQSSEGVSSLSSSPSNSLETQSQS). Ser84, Ser88, Ser90, Ser101, Ser103, Ser105, and Ser124 each carry phosphoserine. A compositionally biased stretch (basic and acidic residues) spans 134-147 (NDRREKRSLSDKEP). Residues Ser238, Ser674, and Ser840 each carry the phosphoserine modification. A disordered region spans residues 928–948 (NKEQWDQLPRDQQQARQSQLA). Residues 937-948 (RDQQQARQSQLA) show a composition bias toward low complexity. Residues 1098-1171 (DAPDEFRDPL…QAWMREKQSS (74 aa)) enclose the U-box domain. Position 1136 is a phosphoserine (Ser1136).

The protein belongs to the ubiquitin conjugation factor E4 family. In terms of assembly, interacts with VCP. Interacts with STUB1/CHIP and UNC45B. Proteolytically cleaved by caspases during apoptosis. Cleaved efficiently at Asp-123 by caspase-6 and granzyme B. Cleaved with approximately 10-fold less efficiency at Asp-109 by caspase-3 and caspase-7. In terms of tissue distribution, expressed predominantly in neuronal tissues. Also detected in liver, heart, brain, kidney and testis.

The protein resides in the cytoplasm. It localises to the nucleus. It catalyses the reaction S-ubiquitinyl-[E2 ubiquitin-conjugating enzyme]-L-cysteine + [acceptor protein]-L-lysine = [E2 ubiquitin-conjugating enzyme]-L-cysteine + N(6)-ubiquitinyl-[acceptor protein]-L-lysine.. It participates in protein modification; protein ubiquitination. Ubiquitin-protein ligase that probably functions as an E3 ligase in conjunction with specific E1 and E2 ligases. May also function as an E4 ligase mediating the assembly of polyubiquitin chains on substrates ubiquitinated by another E3 ubiquitin ligase. May regulate myosin assembly in striated muscles together with STUB1 and VCP/p97 by targeting myosin chaperone UNC45B for proteasomal degradation. In Mus musculus (Mouse), this protein is Ubiquitin conjugation factor E4 B.